The following is a 230-amino-acid chain: D-glycero-alpha-D-manno-heptose 1-phosphate guanylyltransferase (230 aa).

This sequence belongs to the D-alpha-D-heptose-1-P guanylyltransferase family.

It catalyses the reaction D-glycero-alpha-D-manno-heptose 1-phosphate + GTP + H(+) = GDP-D-glycero-alpha-D-manno-heptose + diphosphate. It functions in the pathway nucleotide-sugar biosynthesis; GDP-D-glycero-alpha-D-manno-heptose biosynthesis; GDP-D-glycero-alpha-D-manno-heptose from D-glycero-alpha-D-manno-heptose 7-phosphate: step 3/3. The protein operates within cell surface structure biogenesis; S-layer biogenesis. In terms of biological role, catalyzes the GDP transfer from GTP to D-glycero-alpha-D-manno-heptose 1-phosphate, yielding GDP-D-alpha-D-heptose. Cannot use ATP, CTP, dTTP or UTP as substrate. In Aneurinibacillus thermoaerophilus, this protein is D-glycero-alpha-D-manno-heptose 1-phosphate guanylyltransferase (hddC).